Reading from the N-terminus, the 250-residue chain is LOB domain-containing protein 37 (250 aa).

One can recognise an LOB domain in the interval 1–107 (MSCNGCRVLR…VETVLRGGSL (107 aa)). The segment at 145–227 (DSTDRNIYHH…DSGTTTTTTA (83 aa)) is disordered. Over residues 157 to 170 (FSSSRSRSTMDSSS) the composition is skewed to low complexity.

The protein belongs to the LOB domain-containing protein family. In terms of tissue distribution, expressed in young shoots, roots, stems, leaves and flowers.

In Arabidopsis thaliana (Mouse-ear cress), this protein is LOB domain-containing protein 37 (LBD37).